The sequence spans 492 residues: Phytoene desaturase (lycopene-forming) (492 aa).

Residue 5-38 participates in FAD binding; it reads TVIGAGFGGLALAIRLQAAGIPVLLLEQRDKPGG.

It belongs to the carotenoid/retinoid oxidoreductase family. FAD serves as cofactor.

The protein localises to the cell membrane. The catalysed reaction is 15-cis-phytoene + 4 A = all-trans-lycopene + 4 AH2. It functions in the pathway carotenoid biosynthesis; lycopene biosynthesis. With respect to regulation, inhibited by NAD and NADP. Its function is as follows. Converts 15-cis-phytoene into all-trans-lycopene via the intermediary of all-trans-phytofluene, all-trans-zeta-carotene and all-trans-neurosporene, by the introduction of four double bonds. The polypeptide is Phytoene desaturase (lycopene-forming) (crtI) (Pantoea ananas (Erwinia uredovora)).